Consider the following 485-residue polypeptide: MASSSTVPLGFHYETKYVVLSYLGLLSQEKLQEQHLSSPQGVQLDIASQSLDQEILLKVKTEIEEELKSLDKEISEAFTSTGFDRHTSPVFSPANPESSMEDCLAHLGEKVSQELKEPLHKALQMLLSQPVTYQAFRECTLETTVHASGWNKILVPLVLLRQMLLELTRRGQEPLSALLQFGVTYLEDYSAEYIIQQGGWGTVFSLESEEEEYPGITAEDSNDIYILPSDNSGQVSPPESPTVTTSWQSESLPVSLSASQSWHTESLPVSLGPESWQQIAMDPEEVKSLDSNGAGEKSENNSSNSDIVHVEKEEVPEGMEEAAVASVVLPARELQEALPEAPAPLLPHITATSLLGTREPDTEVITVEKSSPATSLFVELDEEEVKAATTEPTEVEEVVPALEPTETLLSEKEINAREESLVEELSPASEKKPVPPSEGKSRLSPAGEMKPMPLSEGKSILLFGGAAAVAILAVAIGVALALRKK.

The short motif at 14–30 (ETKYVVLSYLGLLSQEK) is the BH4 element. Ser38 carries the post-translational modification Phosphoserine. The BH3 motif lies at 100–116 (MEDCLAHLGEKVSQELK). A BH1 motif is present at residues 147-157 (ASGWNKILVPL). Positions 193 to 206 (YIIQQGGWGTVFSL) match the BH2 motif. Positions 218-248 (AEDSNDIYILPSDNSGQVSPPESPTVTTSWQ) are disordered. A compositionally biased stretch (polar residues) spans 229–248 (SDNSGQVSPPESPTVTTSWQ). The A repeat unit spans residues 246–256 (SWQSESLPVSL). 11 positions are modified to phosphoserine: Ser259, Ser261, Ser303, Ser326, Ser371, Ser375, Ser410, Ser420, Ser426, Ser429, and Ser444. The stretch at 261 to 271 (SWHTESLPVSL) is one A; approximate repeat. The interval 418 to 451 (EESLVEELSPASEKKPVPPSEGKSRLSPAGEMKP) is disordered. The B repeat unit spans residues 425-441 (LSPASEKKPVPPSEGKS). The B; approximate repeat unit spans residues 443-459 (LSPAGEMKPMPLSEGKS). The chain crosses the membrane as a helical span at residues 460–480 (ILLFGGAAAVAILAVAIGVAL).

The protein belongs to the Bcl-2 family. As to quaternary structure, monomer. Ubiquitous, with the highest levels of expression in heart, placenta and pancreas.

It localises to the mitochondrion membrane. The protein localises to the nucleus. Functionally, may promote the activation of caspase-3 and apoptosis. The polypeptide is Bcl-2-like protein 13 (BCL2L13) (Homo sapiens (Human)).